A 674-amino-acid chain; its full sequence is F420-dependent formate dehydrogenase 1 subunit alpha (674 aa).

In terms of domain architecture, 4Fe-4S Mo/W bis-MGD-type spans leucine 3–aspartate 59. [4Fe-4S] cluster-binding residues include cysteine 10, cysteine 13, cysteine 17, and cysteine 45. Position 132 (selenocysteine 132) is a non-standard amino acid, selenocysteine.

This sequence belongs to the prokaryotic molybdopterin-containing oxidoreductase family. Dimer of an alpha (FdhA1) and a beta (FdhB1) subunit. Requires [4Fe-4S] cluster as cofactor. Mo-bis(molybdopterin guanine dinucleotide) is required as a cofactor. The cofactor is Zn(2+).

It carries out the reaction oxidized coenzyme F420-(gamma-L-Glu)(n) + formate + 2 H(+) = reduced coenzyme F420-(gamma-L-Glu)(n) + CO2. Its function is as follows. Catalyzes the oxidation of formate to carbon dioxide, with coenzyme F420 as the electron acceptor. In vitro can also use methyl viologen as electron acceptor. The chain is F420-dependent formate dehydrogenase 1 subunit alpha from Methanococcus maripaludis (strain DSM 14266 / JCM 13030 / NBRC 101832 / S2 / LL).